The sequence spans 205 residues: dTTP/UTP pyrophosphatase (205 aa).

The active-site Proton acceptor is the Asp81.

Belongs to the Maf family. YhdE subfamily. A divalent metal cation is required as a cofactor.

It is found in the cytoplasm. It catalyses the reaction dTTP + H2O = dTMP + diphosphate + H(+). It carries out the reaction UTP + H2O = UMP + diphosphate + H(+). Nucleoside triphosphate pyrophosphatase that hydrolyzes dTTP and UTP. May have a dual role in cell division arrest and in preventing the incorporation of modified nucleotides into cellular nucleic acids. In Agathobacter rectalis (strain ATCC 33656 / DSM 3377 / JCM 17463 / KCTC 5835 / VPI 0990) (Eubacterium rectale), this protein is dTTP/UTP pyrophosphatase.